Reading from the N-terminus, the 330-residue chain is Aspartate--ammonia ligase (330 aa).

Belongs to the class-II aminoacyl-tRNA synthetase family. AsnA subfamily.

Its subcellular location is the cytoplasm. It catalyses the reaction L-aspartate + NH4(+) + ATP = L-asparagine + AMP + diphosphate + H(+). It functions in the pathway amino-acid biosynthesis; L-asparagine biosynthesis; L-asparagine from L-aspartate (ammonia route): step 1/1. This chain is Aspartate--ammonia ligase, found in Escherichia coli O17:K52:H18 (strain UMN026 / ExPEC).